The following is a 318-amino-acid chain: Ubiquitin-like domain-containing CTD phosphatase 1 (318 aa).

The Ubiquitin-like domain maps to 3–81; that stretch reads LSLIIKWGGQ…IMMMGTREES (79 aa). The FCP1 homology domain maps to 133 to 294; sequence PREGKKLLVL…LKLTQYLKEI (162 aa). Positions 143, 145, and 253 each coordinate Mg(2+).

Mg(2+) serves as cofactor.

The protein localises to the nucleus. The catalysed reaction is O-phospho-L-seryl-[protein] + H2O = L-seryl-[protein] + phosphate. It catalyses the reaction O-phospho-L-threonyl-[protein] + H2O = L-threonyl-[protein] + phosphate. Functionally, dephosphorylates 26S nuclear proteasomes, thereby decreasing their proteolytic activity. Recruited to the 19S regulatory particle of the 26S proteasome where it dephosphorylates 19S component PSMC2 which impairs PSMC2 ATPase activity and disrupts 26S proteasome assembly. Has also been reported to stimulate the proteolytic activity of the 26S proteasome. The polypeptide is Ubiquitin-like domain-containing CTD phosphatase 1 (UBLCP1) (Gallus gallus (Chicken)).